The chain runs to 360 residues: MPLKGEISAQAGREFDTSRLDLRAIIDPRDLRVDPTRLFLETTQQTRLAICISDPHQPDCPVVYVNQAFLDLTGYAREEIVGRNCRFLQGADTDPEQVRKLREGIAAERYTVVDLLNYRKDGIPFWNAVHVGPIYGEDGTLQYFYGSQWDITDIVAERRKAETQRRIAAELRHRTGNIFAVLNAIIGLTSRRERDVSEFADKLSERVSALASAHRMTIMDEPDQEAVAIDDLVTGVMKPYRNRFAERVTTSGPKIELGPRSVTALGLALHELATNAVKYGALSVDAGRVEISWSREDGDVTLVWQEQGGPTVSQEQSEPVKGNGTMLIDGMIASLTGSIERDFAAAGLQAKITLPVHQPE.

The region spanning 38-109 is the PAS domain; it reads LFLETTQQTR…KLREGIAAER (72 aa). S-4a-FMN cysteine is present on Cys85. In terms of domain architecture, PAC spans 109 to 163; that stretch reads RYTVVDLLNYRKDGIPFWNAVHVGPIYGEDGTLQYFYGSQWDITDIVAERRKAET. His173 bears the Phosphohistidine; by autocatalysis mark. The interval 260–303 is HWE histidine kinase domain; it reads RSVTALGLALHELATNAVKYGALSVDAGRVEISWSREDGDVTLV.

FMN binds covalently to cysteine after exposure to blue light and this bond is spontaneously broken in the dark.

It catalyses the reaction ATP + protein L-histidine = ADP + protein N-phospho-L-histidine.. In terms of biological role, photosensitive kinase that is involved in increased bacterial virulence upon exposure to light. This Erythrobacter litoralis (strain HTCC2594) protein is Blue-light-activated histidine kinase 1.